The primary structure comprises 118 residues: UPF0231 protein PM0457 (118 aa).

It belongs to the UPF0231 family.

This is UPF0231 protein PM0457 from Pasteurella multocida (strain Pm70).